The chain runs to 356 residues: Transcription factor ATOH1 (356 aa).

Basic and acidic residues predominate over residues 1 to 21 (MSRLLHAEEWAEVKELGDHHR). Disordered stretches follow at residues 1–56 (MSRL…PELS) and 92–125 (SEAA…GPVK). Residues 26–40 (HHLPQPPPPPPPQPP) are compositionally biased toward pro residues. Residues 96–109 (APRDEVDGRGELVR) show a composition bias toward basic and acidic residues. Positions 110 to 124 (RSSGGASSSKSPGPV) are enriched in low complexity. The region spanning 161 to 213 (QRRLAANARERRRMHGLNHAFDQLRNVIPSFNNDKKLSKYETLQMAQIYINAL) is the bHLH domain. 2 disordered regions span residues 218–279 (QTPS…TRFS) and 314–356 (SPSL…DEAS). The span at 252–266 (NATAAGAQQASGGSQ) shows a compositional bias: low complexity. Basic and acidic residues predominate over residues 337-356 (HRSDGEFSPHSHYSDSDEAS).

Efficient DNA binding requires dimerization with another bHLH protein.

It is found in the nucleus. Its function is as follows. Transcriptional regulator. Activates E box-dependent transcription in collaboration with TCF3/E47, but the activity is completely antagonized by the negative regulator of neurogenesis HES1. Plays a role in the differentiation of subsets of neural cells by activating E box-dependent transcription. This chain is Transcription factor ATOH1, found in Pan troglodytes (Chimpanzee).